We begin with the raw amino-acid sequence, 182 residues long: RFKKIRRLGALPGLTSKRPRSGSDPKNQLRSGKRSQYRIRLEEKQKLRFHYGLTERQLLKYVHIAGKAKGSTGQVLLQLLEMRLDNILFRLGMASTIPGARQLVNHRHILVNGRIVDIPSYRCKPRDIITTKDKQRSKALIQNYIASSPHEELPNHLTIDPFQYKGLVNQIIDSKWIGLKIN.

Residues 13-34 (GLTSKRPRSGSDPKNQLRSGKR) are disordered. The region spanning 82–143 (MRLDNILFRL…KQRSKALIQN (62 aa)) is the S4 RNA-binding domain.

This sequence belongs to the universal ribosomal protein uS4 family. In terms of assembly, part of the 30S ribosomal subunit. Contacts protein S5. The interaction surface between S4 and S5 is involved in control of translational fidelity.

The protein localises to the plastid. It localises to the chloroplast. Functionally, one of the primary rRNA binding proteins, it binds directly to 16S rRNA where it nucleates assembly of the body of the 30S subunit. Its function is as follows. With S5 and S12 plays an important role in translational accuracy. The protein is Small ribosomal subunit protein uS4c (rps4) of Iris lutescens (Crimean iris).